The primary structure comprises 1147 residues: Cellulose synthase-like protein D3 (1147 aa).

Disordered stretches follow at residues Met-1–Gln-33 and Lys-259–Pro-281. 2 stretches are compositionally biased toward gly residues: residues Gly-14–Gly-29 and Gly-262–Pro-272. 2 helical membrane passes run Val-292–Thr-312 and Ala-322–Leu-342. Catalysis depends on residues Asp-422 and Asp-847. A run of 6 helical transmembrane segments spans residues Ile-929–Val-949, Ile-954–Glu-974, Leu-1001–Leu-1021, Leu-1045–Ala-1065, Trp-1075–Phe-1095, and Thr-1108–Ile-1128.

It belongs to the glycosyltransferase 2 family. Plant cellulose synthase-like D subfamily.

It is found in the golgi apparatus membrane. In terms of biological role, thought to be a Golgi-localized beta-glycan synthase that polymerize the backbones of noncellulosic polysaccharides (hemicelluloses) of plant cell wall. The chain is Cellulose synthase-like protein D3 (CSLD3) from Oryza sativa subsp. japonica (Rice).